Consider the following 139-residue polypeptide: Aspartate 1-decarboxylase (139 aa).

The active-site Schiff-base intermediate with substrate; via pyruvic acid is serine 25. Serine 25 carries the post-translational modification Pyruvic acid (Ser). Substrate is bound at residue threonine 57. Tyrosine 58 functions as the Proton donor in the catalytic mechanism. Residue 73–75 coordinates substrate; the sequence is GAA. A disordered region spans residues 116–139; the sequence is ELGSDPAHAPEGSGLTSPRSLTFA. Residues 129–139 show a composition bias toward polar residues; that stretch reads GLTSPRSLTFA.

The protein belongs to the PanD family. In terms of assembly, heterooctamer of four alpha and four beta subunits. It depends on pyruvate as a cofactor. Post-translationally, is synthesized initially as an inactive proenzyme, which is activated by self-cleavage at a specific serine bond to produce a beta-subunit with a hydroxyl group at its C-terminus and an alpha-subunit with a pyruvoyl group at its N-terminus.

It is found in the cytoplasm. It carries out the reaction L-aspartate + H(+) = beta-alanine + CO2. It functions in the pathway cofactor biosynthesis; (R)-pantothenate biosynthesis; beta-alanine from L-aspartate: step 1/1. Its function is as follows. Catalyzes the pyruvoyl-dependent decarboxylation of aspartate to produce beta-alanine. The protein is Aspartate 1-decarboxylase of Nocardia farcinica (strain IFM 10152).